Reading from the N-terminus, the 225-residue chain is Cytidylate kinase (225 aa).

Position 11 to 19 (11 to 19) interacts with ATP; the sequence is GPAAAGKST.

This sequence belongs to the cytidylate kinase family. Type 1 subfamily.

Its subcellular location is the cytoplasm. It carries out the reaction CMP + ATP = CDP + ADP. The catalysed reaction is dCMP + ATP = dCDP + ADP. This is Cytidylate kinase from Bacillus cereus (strain AH187).